The chain runs to 463 residues: Glutamate--tRNA ligase 1 (463 aa).

A 'HIGH' region motif is present at residues 10–20 (PSPTGYLHIGG). Residues 238–242 (KLSKR) carry the 'KMSKS' region motif. Lysine 241 provides a ligand contact to ATP.

The protein belongs to the class-I aminoacyl-tRNA synthetase family. Glutamate--tRNA ligase type 1 subfamily. As to quaternary structure, monomer.

The protein localises to the cytoplasm. The enzyme catalyses tRNA(Glu) + L-glutamate + ATP = L-glutamyl-tRNA(Glu) + AMP + diphosphate. Its function is as follows. Catalyzes the attachment of glutamate to tRNA(Glu) in a two-step reaction: glutamate is first activated by ATP to form Glu-AMP and then transferred to the acceptor end of tRNA(Glu). The sequence is that of Glutamate--tRNA ligase 1 from Helicobacter pylori (strain Shi470).